A 219-amino-acid polypeptide reads, in one-letter code: Dynein light chain Tctex-type 4 (219 aa).

The tract at residues 1-84 (MACRTLPSRR…RRPSLGPVPP (84 aa)) is disordered. Residues 9-20 (RRQEEETTKDLA) show a composition bias toward basic and acidic residues. The residue at position 64 (S64) is a Phosphoserine.

This sequence belongs to the dynein light chain Tctex-type family. As to quaternary structure, interacts with ENG/endoglin, TGFBR2 and TGFBR3. Interacts with PPP1CC.

Its subcellular location is the cell projection. It localises to the cilium. The protein localises to the flagellum. It is found in the cytoplasmic vesicle. The protein resides in the secretory vesicle. Its subcellular location is the acrosome. It localises to the cytoplasm. The protein localises to the cytoskeleton. It is found in the cilium axoneme. The protein resides in the nucleus. Its subcellular location is the microtubule organizing center. This is Dynein light chain Tctex-type 4 (Dynlt4) from Mus musculus (Mouse).